Reading from the N-terminus, the 220-residue chain is Splicing factor U2AF 26 kDa subunit (220 aa).

Position 2 is an N-acetylalanine (A2). The segment at 12-40 (EKDKVNCSFYFKIGACRHGDRCSRLHNKP) adopts a C3H1-type 1 zinc-finger fold. An RRM domain is found at 65–147 (SHCHVSDVEV…QAVHAELSPV (83 aa)). The C3H1-type 2 zinc finger occupies 149 to 176 (DFRESCCRQYEMGECTRGGFCNFMHLRP). Positions 186-220 (YGRGPRHRSPPRSHTGHRPRERNRRRSPDHRHGRF) are disordered. A compositionally biased stretch (basic residues) spans 189-220 (GPRHRSPPRSHTGHRPRERNRRRSPDHRHGRF).

Belongs to the splicing factor SR family. As to quaternary structure, interacts with GFI1, U2AF2 and C1QBP. Isoform 3 interacts with PER1. Isoform 3 is rapidly degraded by a proteasome-mediated degradation pathway. Ubiquitous. Highly expressed in the brain.

It is found in the nucleus. Its subcellular location is the nucleus speckle. It localises to the cytoplasm. Its function is as follows. RNA-binding protein that function as a pre-mRNA splicing factor. Plays a critical role in both constitutive and enhancer-dependent splicing by mediating protein-protein interactions and protein-RNA interactions required for accurate 3'-splice site selection. It can functionally substitute for U2AF1 in constitutive splicing and enhancer-dependent splicing. Acts by enhancing the binding of U2AF2 to weak pyrimidine tracts. Also participates in the regulation of alternative pre-mRNA splicing. Activates exon 5 skipping of PTPRC during T-cell activation; an event reversed by GFI1. Binds to RNA at the AG dinucleotide at the 3'-splice site. Shows a preference for AGC or AGA. Alternative splicing of U2AF1L4 may play a role in connecting the circadian rhythm to changing external cues: may provide a circadian buffering system in central and periphery clocks that allows synchronized adaption to clock-resetting stimuli in order to prevent potentially pathogenic desynchronization. The sequence is that of Splicing factor U2AF 26 kDa subunit (U2af1l4) from Mus musculus (Mouse).